Here is a 306-residue protein sequence, read N- to C-terminus: tRNA dimethylallyltransferase 1 (306 aa).

13–20 is an ATP binding site; sequence GPTASGKT. 15 to 20 contributes to the substrate binding site; it reads TASGKT. Residues 38–41 form an interaction with substrate tRNA region; it reads DSRQ.

This sequence belongs to the IPP transferase family. As to quaternary structure, monomer. It depends on Mg(2+) as a cofactor.

It carries out the reaction adenosine(37) in tRNA + dimethylallyl diphosphate = N(6)-dimethylallyladenosine(37) in tRNA + diphosphate. Its function is as follows. Catalyzes the transfer of a dimethylallyl group onto the adenine at position 37 in tRNAs that read codons beginning with uridine, leading to the formation of N6-(dimethylallyl)adenosine (i(6)A). This chain is tRNA dimethylallyltransferase 1, found in Azobacteroides pseudotrichonymphae genomovar. CFP2.